The following is a 107-amino-acid chain: Ig kappa chain V-VI region NQ2-17.4.1 (107 aa).

Residues 1–23 form a framework-1 region; the sequence is QIVLTQSPAIMSASPGQKVTMTC. Cys23 and Cys87 form a disulfide bridge. Positions 24-33 are complementarity-determining-1; sequence SASSSVSYMH. Residues 34-48 form a framework-2 region; it reads WYQQKSGTSPKRWIY. Residues 49–55 form a complementarity-determining-2 region; it reads DTSKLAS. Residues 56–87 form a framework-3 region; the sequence is GVPARFSGSGSATSYSLTITSMQAEDAATYYC. A complementarity-determining-3 region spans residues 88 to 96; that stretch reads QQWSSNPLT. Residues 97–106 are framework-4; that stretch reads FGAGTKLELK.

In terms of biological role, anti-2-phenyl oxazolone (PHOX) Antibody. This Mus musculus (Mouse) protein is Ig kappa chain V-VI region NQ2-17.4.1.